The sequence spans 199 residues: Probable cobalt-precorrin-6B C(15)-methyltransferase (decarboxylating) (199 aa).

S-adenosyl-L-methionine contacts are provided by residues T24, 48 to 52 (GCGTG), D72, and A101.

Belongs to the methyltransferase superfamily. Archaeal-type CbiT family.

It carries out the reaction Co-precorrin-6B + S-adenosyl-L-methionine = Co-precorrin-7 + S-adenosyl-L-homocysteine + CO2. The protein operates within cofactor biosynthesis; adenosylcobalamin biosynthesis; cob(II)yrinate a,c-diamide from sirohydrochlorin (anaerobic route): step 8/10. Its function is as follows. Catalyzes the methylation of C-15 in cobalt-precorrin-6B followed by the decarboxylation of C-12 to form cobalt-precorrin-7. The polypeptide is Probable cobalt-precorrin-6B C(15)-methyltransferase (decarboxylating) (Saccharolobus islandicus (strain Y.N.15.51 / Yellowstone #2) (Sulfolobus islandicus)).